The sequence spans 133 residues: Fluoride-specific ion channel FluC 4 (133 aa).

3 helical membrane passes run 7-27 (ILVLVGGFIGGVMRFFLSGYV), 37-57 (WGTFVVNVSGAFVIGTAAGLG), and 60-80 (LGGIFSTTIFHEFIMVGLLGG). Positions 79 and 82 each coordinate Na(+). The chain crosses the membrane as a helical span at residues 107–127 (IVASALLCVLAVAAGYGGIMW).

It belongs to the fluoride channel Fluc/FEX (TC 1.A.43) family.

Its subcellular location is the cell inner membrane. It catalyses the reaction fluoride(in) = fluoride(out). Its activity is regulated as follows. Na(+) is not transported, but it plays an essential structural role and its presence is essential for fluoride channel function. Fluoride-specific ion channel. Important for reducing fluoride concentration in the cell, thus reducing its toxicity. The protein is Fluoride-specific ion channel FluC 4 of Brucella abortus biovar 1 (strain 9-941).